The following is a 485-amino-acid chain: 1-aminocyclopropane-1-carboxylate synthase 2 (485 aa).

Positions 55 and 92 each coordinate substrate. Position 278 is an N6-(pyridoxal phosphate)lysine (Lys278). Position 460 is a phosphoserine (Ser460).

The protein belongs to the class-I pyridoxal-phosphate-dependent aminotransferase family. In terms of assembly, homodimer and heterodimer. In vivo, the relevance of heterodimerization with other ACS enzymes is however unsure. The cofactor is pyridoxal 5'-phosphate. In terms of processing, phosphorylated on Ser 460; phosphorylation may regulate its turnover. May be processed at its C-terminus.

The catalysed reaction is S-adenosyl-L-methionine = 1-aminocyclopropane-1-carboxylate + S-methyl-5'-thioadenosine + H(+). Its pathway is alkene biosynthesis; ethylene biosynthesis via S-adenosyl-L-methionine; ethylene from S-adenosyl-L-methionine: step 1/2. Functionally, 1-aminocyclopropane-1-carboxylate synthase (ACS) enzymes catalyze the conversion of S-adenosyl-L-methionine (SAM) into 1-aminocyclopropane-1-carboxylate (ACC), a direct precursor of ethylene. This Solanum lycopersicum (Tomato) protein is 1-aminocyclopropane-1-carboxylate synthase 2 (ACS2).